The sequence spans 444 residues: Cell wall mannoprotein PST1 (444 aa).

Residues 1-19 (MQLHSLIASTALLITSALA) form the signal peptide. 15 N-linked (GlcNAc...) asparagine glycosylation sites follow: Asn57, Asn76, Asn83, Asn86, Asn196, Asn210, Asn228, Asn235, Asn242, Asn263, Asn268, Asn280, Asn292, Asn305, and Asn329. Composition is skewed to low complexity over residues 359–381 (SVKLSSTSKSQSSQTTAKVSKSS) and 395–417 (KAAASASSVSSSSASSSSSKSSK). A disordered region spans residues 359–418 (SVKLSSTSKSQSSQTTAKVSKSSSKAEEKKFTSGDIKAAASASSVSSSSASSSSSKSSKG). A lipid anchor (GPI-anchor amidated asparagine) is attached at Asn419. Residues 420–444 (AAIMAPIGQTTPLVGLLTAIIMSIM) constitute a propeptide, removed in mature form.

Belongs to the SPS2 family. In terms of processing, extensively N- and O-mannosylated.

The protein localises to the cell membrane. It localises to the secreted. Its subcellular location is the cell wall. Has a partially redundant function to ECM33 in cell wall integrity. May be involved in a repair mechanism activated in response to cell wall damage. This is Cell wall mannoprotein PST1 (PST1) from Saccharomyces cerevisiae (strain YJM789) (Baker's yeast).